A 274-amino-acid chain; its full sequence is MAVISMKQLLEAGVHFGHQTRRWNPKMKTYIFGARNGIYIIDLQRTVRLFHTAYQFVTQTVGSGEHVLFVGTKQQARDTIAEEAQRCGMYYINQRWLGGMLTNFKTIKLRVDRLKELDAMVEDGSINRFPKKEILQLMGEREKLEKNLGGIKNMARLPGALYVVDTQRENIAVLEANRLGIPVVAIVDTNCDPDLINYPIPGNDDAIRAIRLITSKVADACAEGRRRLEETEQADHDKEFTALEEVPAGQILKDEASGPIVEIVNPVAEAEEEQ.

This sequence belongs to the universal ribosomal protein uS2 family.

In Syntrophobacter fumaroxidans (strain DSM 10017 / MPOB), this protein is Small ribosomal subunit protein uS2.